Here is a 190-residue protein sequence, read N- to C-terminus: Small ribosomal subunit protein eS7 (190 aa).

This sequence belongs to the eukaryotic ribosomal protein eS7 family. Component of the small ribosomal subunit. Part of the small subunit (SSU) processome, composed of more than 70 proteins and the RNA chaperone small nucleolar RNA (snoRNA) U3.

The protein resides in the cytoplasm. Its subcellular location is the cytoskeleton. It localises to the microtubule organizing center. The protein localises to the centrosome. It is found in the nucleus. The protein resides in the nucleolus. Functionally, component of the small ribosomal subunit. The ribosome is a large ribonucleoprotein complex responsible for the synthesis of proteins in the cell. Required for rRNA maturation. Part of the small subunit (SSU) processome, first precursor of the small eukaryotic ribosomal subunit. During the assembly of the SSU processome in the nucleolus, many ribosome biogenesis factors, an RNA chaperone and ribosomal proteins associate with the nascent pre-rRNA and work in concert to generate RNA folding, modifications, rearrangements and cleavage as well as targeted degradation of pre-ribosomal RNA by the RNA exosome. In Spodoptera frugiperda (Fall armyworm), this protein is Small ribosomal subunit protein eS7 (RpS7).